We begin with the raw amino-acid sequence, 270 residues long: MPELPEVETTRRGIEPHLVGQRVSRVLVRDRRLRWPIPEDLDVRLSGQRIEAVERRAKYLLIRAESGTLIVHLGMSGSLRLVDAASPAAKHEHVDILLESGQALRYTDPRRFGAMLWSDEPLAHVLLASLGPEPLGEDFDGDRLYRLSRGRSMAVKPFIMDNAVVVGVGNIYASEALFAAGIDPRRPAGSISRARYLKLGEEIRRILAMAIERGGTTLRDFVGGDGKPGYFQQELFVYGRGGEFCKSCGSTLREIRLGQRASVYCSRCQR.

P2 serves as the catalytic Schiff-base intermediate with DNA. The active-site Proton donor is E3. K58 functions as the Proton donor; for beta-elimination activity in the catalytic mechanism. Residues H91, R110, and R151 each contribute to the DNA site. The FPG-type zinc finger occupies F236–R270. The active-site Proton donor; for delta-elimination activity is the R260.

Belongs to the FPG family. As to quaternary structure, monomer. Zn(2+) is required as a cofactor.

The enzyme catalyses Hydrolysis of DNA containing ring-opened 7-methylguanine residues, releasing 2,6-diamino-4-hydroxy-5-(N-methyl)formamidopyrimidine.. The catalysed reaction is 2'-deoxyribonucleotide-(2'-deoxyribose 5'-phosphate)-2'-deoxyribonucleotide-DNA = a 3'-end 2'-deoxyribonucleotide-(2,3-dehydro-2,3-deoxyribose 5'-phosphate)-DNA + a 5'-end 5'-phospho-2'-deoxyribonucleoside-DNA + H(+). Functionally, involved in base excision repair of DNA damaged by oxidation or by mutagenic agents. Acts as a DNA glycosylase that recognizes and removes damaged bases. Has a preference for oxidized purines, such as 7,8-dihydro-8-oxoguanine (8-oxoG). Has AP (apurinic/apyrimidinic) lyase activity and introduces nicks in the DNA strand. Cleaves the DNA backbone by beta-delta elimination to generate a single-strand break at the site of the removed base with both 3'- and 5'-phosphates. The polypeptide is Formamidopyrimidine-DNA glycosylase (Stutzerimonas stutzeri (strain A1501) (Pseudomonas stutzeri)).